The sequence spans 120 residues: Large-conductance mechanosensitive channel (120 aa).

Helical transmembrane passes span 7–27 and 64–84; these read EFAL…GAAF and GLFI…FIFV.

It belongs to the MscL family. As to quaternary structure, homopentamer.

The protein localises to the cell membrane. Functionally, channel that opens in response to stretch forces in the membrane lipid bilayer. May participate in the regulation of osmotic pressure changes within the cell. In Staphylococcus aureus (strain Mu3 / ATCC 700698), this protein is Large-conductance mechanosensitive channel.